We begin with the raw amino-acid sequence, 182 residues long: Adenylate kinase (182 aa).

12–17 serves as a coordination point for ATP; sequence GAGKGT. The segment at 32–61 is NMP; the sequence is STGELLRKEIEMNTALGIQVKDIMNRGELV. AMP is bound by residues T33, R38, 59 to 61, 85 to 88, and Q92; these read ELV and GYPR. Residues 126-132 form an LID region; sequence LRGRKDD. R127 is a binding site for ATP. AMP contacts are provided by R129 and R140. Position 168 (R168) interacts with ATP.

This sequence belongs to the adenylate kinase family. Monomer.

The protein resides in the cytoplasm. It catalyses the reaction AMP + ATP = 2 ADP. Its pathway is purine metabolism; AMP biosynthesis via salvage pathway; AMP from ADP: step 1/1. Its function is as follows. Catalyzes the reversible transfer of the terminal phosphate group between ATP and AMP. Plays an important role in cellular energy homeostasis and in adenine nucleotide metabolism. The sequence is that of Adenylate kinase from Prochlorococcus marinus (strain MIT 9301).